A 299-amino-acid chain; its full sequence is MLKSSKKEDSSKKNQNNKLIFTVRKLFSPIKNFFRKTKTPDNFFGVIKRLKINSQKMTLDERNILANLLELEYKTIEDIMVPRSDIAAIKLTTNLEELSESIKLEVPHTRTLIYDGTLDNVVGFIHIKDLFKALATKQNGRLKKLIRKHIIAAPSMKLLDLLAKMRRERTHIAIVVDEYGGTDGLVTIEDLIEEIVGRIDDEHDQQLDSDNFKVINNSTIISNARVEVEVLEEIIGEKLQNDDDEFDTIGGLVLTRVSSVPAIGTRIDISENIEIEVTDATPRSLKQVKIRLKNGLNGK.

2 consecutive CBS domains span residues 80–142 (MVPR…NGRL) and 145–202 (LIRK…IDDE).

This sequence belongs to the UPF0053 family. Hemolysin C subfamily.

The protein is Hemolysin C homolog (tlyC) of Rickettsia massiliae (strain Mtu5).